The primary structure comprises 597 residues: Probable translation initiation factor IF-2 (597 aa).

Residues 4 to 221 (IRQPIIAVLG…LISGLAQKYL (218 aa)) enclose the tr-type G domain. Residues 13-20 (GHVDHGKT) are G1. Residue 13-20 (GHVDHGKT) coordinates GTP. Residues 38–42 (GITQH) form a G2 region. Residues 77-80 (DTPG) are G3. GTP-binding positions include 77–81 (DTPGH) and 131–134 (NKID). Residues 131–134 (NKID) form a G4 region. The interval 199–201 (SAK) is G5.

It belongs to the TRAFAC class translation factor GTPase superfamily. Classic translation factor GTPase family. IF-2 subfamily.

Function in general translation initiation by promoting the binding of the formylmethionine-tRNA to ribosomes. Seems to function along with eIF-2. The protein is Probable translation initiation factor IF-2 of Thermococcus sibiricus (strain DSM 12597 / MM 739).